A 147-amino-acid chain; its full sequence is Myoglobin (147 aa).

Residues Ala-2–Lys-141 form the Globin domain. Residue His-60 coordinates nitrite. His-60 provides a ligand contact to O2. A heme b-binding site is contributed by His-89.

The protein belongs to the globin family. In terms of assembly, monomeric.

It localises to the cytoplasm. It is found in the sarcoplasm. The catalysed reaction is Fe(III)-heme b-[protein] + nitric oxide + H2O = Fe(II)-heme b-[protein] + nitrite + 2 H(+). It catalyses the reaction H2O2 + AH2 = A + 2 H2O. Its function is as follows. Monomeric heme protein which primary function is to store oxygen and facilitate its diffusion within muscle tissues. Reversibly binds oxygen through a pentacoordinated heme iron and enables its timely and efficient release as needed during periods of heightened demand. Depending on the oxidative conditions of tissues and cells, and in addition to its ability to bind oxygen, it also has a nitrite reductase activity whereby it regulates the production of bioactive nitric oxide. Under stress conditions, like hypoxia and anoxia, it also protects cells against reactive oxygen species thanks to its pseudoperoxidase activity. This Thunnus obesus (Bigeye tuna) protein is Myoglobin (mb).